The sequence spans 207 residues: ATP-dependent Clp protease proteolytic subunit (207 aa).

Ser-111 (nucleophile) is an active-site residue. His-136 is a catalytic residue.

This sequence belongs to the peptidase S14 family. As to quaternary structure, fourteen ClpP subunits assemble into 2 heptameric rings which stack back to back to give a disk-like structure with a central cavity, resembling the structure of eukaryotic proteasomes.

The protein resides in the cytoplasm. The catalysed reaction is Hydrolysis of proteins to small peptides in the presence of ATP and magnesium. alpha-casein is the usual test substrate. In the absence of ATP, only oligopeptides shorter than five residues are hydrolyzed (such as succinyl-Leu-Tyr-|-NHMec, and Leu-Tyr-Leu-|-Tyr-Trp, in which cleavage of the -Tyr-|-Leu- and -Tyr-|-Trp bonds also occurs).. In terms of biological role, cleaves peptides in various proteins in a process that requires ATP hydrolysis. Has a chymotrypsin-like activity. Plays a major role in the degradation of misfolded proteins. The polypeptide is ATP-dependent Clp protease proteolytic subunit (Burkholderia mallei (strain ATCC 23344)).